A 375-amino-acid polypeptide reads, in one-letter code: MSCPVIELTQQLIRRPSLSPYDAGCQALLIERLQAIGFTVERMDFADTQNFWAWRGQGETLAFAGHTDVVPPGDADRWINPPFEPTIRDGMLFGRGAADMKGSLAAMVVAAERFVAQHPNHTGRLAFLITSDEEASAHNGTVKVVEALMARNERLDYCLVGEPSSIEVVGDVVKNGRRGSLTCNLTIHGVQGHVAYPHLADNPVHRAAPFLNELVAIEWDQGNEFFPATSMQIANIQAGTGSNNVIPGELFVQFNFRFSTELTDEMIKAQVLALLEKHQLRYTVDWWLSGQPFLTARGKLVDAVVNAVEHYNEIKPQLLTTGGTSDGRFIARMGAQVVELGPVNATIHKINECVNAADLQLLARMYQRIMEQLVA.

His66 is a binding site for Zn(2+). Residue Asp68 is part of the active site. Asp99 is a binding site for Zn(2+). The Proton acceptor role is filled by Glu133. 3 residues coordinate Zn(2+): Glu134, Glu162, and His348.

The protein belongs to the peptidase M20A family. DapE subfamily. Homodimer. Zn(2+) serves as cofactor. The cofactor is Co(2+).

The catalysed reaction is N-succinyl-(2S,6S)-2,6-diaminopimelate + H2O = (2S,6S)-2,6-diaminopimelate + succinate. It participates in amino-acid biosynthesis; L-lysine biosynthesis via DAP pathway; LL-2,6-diaminopimelate from (S)-tetrahydrodipicolinate (succinylase route): step 3/3. Functionally, catalyzes the hydrolysis of N-succinyl-L,L-diaminopimelic acid (SDAP), forming succinate and LL-2,6-diaminopimelate (DAP), an intermediate involved in the bacterial biosynthesis of lysine and meso-diaminopimelic acid, an essential component of bacterial cell walls. This chain is Succinyl-diaminopimelate desuccinylase, found in Shigella flexneri serotype 5b (strain 8401).